The primary structure comprises 124 residues: MENENKILIIRVIRSFEYRTIKNLILKDIDLNTNVSDFKKLVADKIQTTPGFTPFKTKQYDSMKIFFVPHGQKPNNLTINIENDHFFLNNNKSLAENGVVYETEISFFVMEDYLKYKENPENKW.

Belongs to the UPF0538 family.

In Dictyostelium discoideum (Social amoeba), this protein is UPF0538 protein.